The chain runs to 434 residues: D-amino acid dehydrogenase (434 aa).

V3–Y17 provides a ligand contact to FAD.

The protein belongs to the DadA oxidoreductase family. FAD is required as a cofactor.

It catalyses the reaction a D-alpha-amino acid + A + H2O = a 2-oxocarboxylate + AH2 + NH4(+). It participates in amino-acid degradation; D-alanine degradation; NH(3) and pyruvate from D-alanine: step 1/1. In terms of biological role, oxidative deamination of D-amino acids. The sequence is that of D-amino acid dehydrogenase from Pseudomonas putida (strain GB-1).